Reading from the N-terminus, the 215-residue chain is Peptide methionine sulfoxide reductase MsrA (215 aa).

Cys-58 is an active-site residue.

Belongs to the MsrA Met sulfoxide reductase family.

It catalyses the reaction L-methionyl-[protein] + [thioredoxin]-disulfide + H2O = L-methionyl-(S)-S-oxide-[protein] + [thioredoxin]-dithiol. It carries out the reaction [thioredoxin]-disulfide + L-methionine + H2O = L-methionine (S)-S-oxide + [thioredoxin]-dithiol. Its function is as follows. Has an important function as a repair enzyme for proteins that have been inactivated by oxidation. Catalyzes the reversible oxidation-reduction of methionine sulfoxide in proteins to methionine. This is Peptide methionine sulfoxide reductase MsrA from Pseudomonas syringae pv. tomato (strain ATCC BAA-871 / DC3000).